Here is a 438-residue protein sequence, read N- to C-terminus: Serine hydroxymethyltransferase (438 aa).

133–135 is a (6S)-5,6,7,8-tetrahydrofolate binding site; that stretch reads GHI. Lys-239 is subject to N6-(pyridoxal phosphate)lysine.

Belongs to the SHMT family. Homodimer. Pyridoxal 5'-phosphate serves as cofactor.

The protein resides in the cytoplasm. It carries out the reaction 5,10-methylenetetrahydromethanopterin + glycine + H2O = 5,6,7,8-tetrahydromethanopterin + L-serine. The protein operates within amino-acid biosynthesis; glycine biosynthesis; glycine from L-serine: step 1/1. Catalyzes the reversible interconversion of serine and glycine with tetrahydromethanopterin (H4MPT) serving as the one-carbon carrier. Also exhibits a pteridine-independent aldolase activity toward beta-hydroxyamino acids, producing glycine and aldehydes, via a retro-aldol mechanism. The sequence is that of Serine hydroxymethyltransferase from Archaeoglobus fulgidus (strain ATCC 49558 / DSM 4304 / JCM 9628 / NBRC 100126 / VC-16).